Here is a 487-residue protein sequence, read N- to C-terminus: ESCRT-I complex subunit vps23 (487 aa).

The SB domain maps to 428 to 487 (SERELKYYELKRKDEKLDEGIRALNQALHHESIMPASWLKGIKLLARQQFLIRDEMLQYS).

Component of the ESCRT-I complex (endosomal sorting complex required for transport I).

Its subcellular location is the cytoplasm. The protein localises to the endosome. It is found in the late endosome membrane. In terms of biological role, component of the ESCRT-I complex, a regulator of vesicular trafficking process. Binds to ubiquitinated cargo proteins and is required for the sorting of endocytic ubiquitinated cargos into multivesicular bodies (MVBs). Mediates the association to the ESCRT-0 complex. The chain is ESCRT-I complex subunit vps23 (sst6) from Schizosaccharomyces pombe (strain 972 / ATCC 24843) (Fission yeast).